Consider the following 638-residue polypeptide: 1-deoxy-D-xylulose-5-phosphate synthase (638 aa).

Residues H79 and 120 to 122 (GHS) each bind thiamine diphosphate. A Mg(2+)-binding site is contributed by D151. Thiamine diphosphate-binding positions include 152–153 (GA), N182, Y291, and E373. A Mg(2+)-binding site is contributed by N182.

It belongs to the transketolase family. DXPS subfamily. Homodimer. The cofactor is Mg(2+). It depends on thiamine diphosphate as a cofactor.

The catalysed reaction is D-glyceraldehyde 3-phosphate + pyruvate + H(+) = 1-deoxy-D-xylulose 5-phosphate + CO2. Its pathway is metabolic intermediate biosynthesis; 1-deoxy-D-xylulose 5-phosphate biosynthesis; 1-deoxy-D-xylulose 5-phosphate from D-glyceraldehyde 3-phosphate and pyruvate: step 1/1. Functionally, catalyzes the acyloin condensation reaction between C atoms 2 and 3 of pyruvate and glyceraldehyde 3-phosphate to yield 1-deoxy-D-xylulose-5-phosphate (DXP). In Xanthomonas euvesicatoria pv. vesicatoria (strain 85-10) (Xanthomonas campestris pv. vesicatoria), this protein is 1-deoxy-D-xylulose-5-phosphate synthase.